A 559-amino-acid chain; its full sequence is Frizzled-1 (559 aa).

An N-terminal signal peptide occupies residues 1 to 35; it reads MKHSHLLQRCSAQLCTRGSSLILSLLLSVCLSVEG. At 36–239 the chain is on the extracellular side; that stretch reads QYNGEKGISI…FAPEELNFAR (204 aa). Residues 46 to 165 form the FZ domain; sequence PDHGYCQPIS…NGAGELCVGQ (120 aa). Intrachain disulfides connect Cys-51–Cys-112, Cys-59–Cys-105, Cys-96–Cys-133, Cys-122–Cys-162, and Cys-126–Cys-150. N-linked (GlcNAc...) asparagine glycosylation occurs at Asn-65. Residue Asn-166 is glycosylated (N-linked (GlcNAc...) asparagine). A helical membrane pass occupies residues 240–260; that stretch reads IWIGIWSVLCCASTLFTVLTY. Over 261-273 the chain is Cytoplasmic; sequence LVDMKRFSYPERP. Residues 274–294 form a helical membrane-spanning segment; that stretch reads IIFLSGCYTMVAIAYIAGFLL. Residues 295 to 321 are Extracellular-facing; sequence EDKVVCNERFAEDGYKTVAQGTKKEGC. A helical transmembrane segment spans residues 322–342; that stretch reads TFLFMMLYFFSMASSIWWVIL. At 343 to 364 the chain is on the cytoplasmic side; sequence SLTWFLAAGMKWGHEAIEANSQ. A helical transmembrane segment spans residues 365-385; that stretch reads YFHLAAWAVPAIKTITILAVG. The Extracellular segment spans residues 386–408; it reads QVDGDTLSGVCFVGINNVDALRG. The chain crosses the membrane as a helical span at residues 409–429; it reads FVLAPLFVYLFIGTSFLLAGF. The Cytoplasmic segment spans residues 430-455; that stretch reads VSLFRIRTIMKHDGTKTEKLEKLMVR. The helical transmembrane segment at 456–476 threads the bilayer; the sequence is IGIFSVLYTVPATIVIACYFY. At 477 to 513 the chain is on the extracellular side; that stretch reads EQAFREQWEKSWISQSCKTYAIPCPSTGHPPMSPDFT. The chain crosses the membrane as a helical span at residues 514 to 534; it reads VFMIKYLMTLIVGITSGFWIW. Over 535–559 the chain is Cytoplasmic; the sequence is SGKTLNSWRKFYTRLTNSKQGETTV. Positions 537 to 542 match the Lys-Thr-X-X-X-Trp motif, mediates interaction with the PDZ domain of Dvl family members motif; sequence KTLNSW. The PDZ-binding motif lies at 557 to 559; the sequence is TTV.

Belongs to the G-protein coupled receptor Fz/Smo family. As to quaternary structure, interacts with wnt8. In the embryo, expressed in the heart, pronephros and otic vesicles.

It localises to the cell membrane. Its function is as follows. Receptor for Wnt proteins. Functions in the canonical Wnt/beta-catenin signaling pathway. The canonical Wnt/beta-catenin signaling pathway leads to the activation of disheveled proteins, inhibition of GSK-3 kinase, nuclear accumulation of beta-catenin and activation of Wnt target genes. A second signaling pathway involving PKC and calcium fluxes has been seen for some family members, but it is not yet clear if it represents a distinct pathway or if it can be integrated in the canonical pathway, as PKC seems to be required for Wnt-mediated inactivation of GSK-3 kinase. Both pathways seem to involve interactions with G-proteins. May be involved in transduction and intercellular transmission of polarity information during tissue morphogenesis and/or in differentiated tissues. This is Frizzled-1 (fzd1) from Xenopus laevis (African clawed frog).